We begin with the raw amino-acid sequence, 221 residues long: Ribosomal RNA small subunit methyltransferase Nep1 (221 aa).

S-adenosyl-L-methionine contacts are provided by residues glycine 174, glycine 179, and 196–201 (VGDEPL).

Belongs to the class IV-like SAM-binding methyltransferase superfamily. RNA methyltransferase NEP1 family. Homodimer.

The catalysed reaction is a pseudouridine in rRNA + S-adenosyl-L-methionine = an N(1)-methylpseudouridine in rRNA + S-adenosyl-L-homocysteine + H(+). In terms of biological role, methyltransferase involved in ribosomal biogenesis. Specifically catalyzes the N1-methylation of the pseudouridine corresponding to position 914 in M.jannaschii 16S rRNA. This Pyrobaculum neutrophilum (strain DSM 2338 / JCM 9278 / NBRC 100436 / V24Sta) (Thermoproteus neutrophilus) protein is Ribosomal RNA small subunit methyltransferase Nep1.